The following is a 145-amino-acid chain: Aspartate 1-decarboxylase (145 aa).

The active-site Schiff-base intermediate with substrate; via pyruvic acid is the Ser-26. At Ser-26 the chain carries Pyruvic acid (Ser). Thr-58 is a binding site for substrate. Tyr-59 serves as the catalytic Proton donor. 74-76 contacts substrate; that stretch reads GGA.

It belongs to the PanD family. Heterooctamer of four alpha and four beta subunits. It depends on pyruvate as a cofactor. In terms of processing, is synthesized initially as an inactive proenzyme, which is activated by self-cleavage at a specific serine bond to produce a beta-subunit with a hydroxyl group at its C-terminus and an alpha-subunit with a pyruvoyl group at its N-terminus.

It is found in the cytoplasm. The enzyme catalyses L-aspartate + H(+) = beta-alanine + CO2. Its pathway is cofactor biosynthesis; (R)-pantothenate biosynthesis; beta-alanine from L-aspartate: step 1/1. Its function is as follows. Catalyzes the pyruvoyl-dependent decarboxylation of aspartate to produce beta-alanine. The protein is Aspartate 1-decarboxylase of Synechocystis sp. (strain ATCC 27184 / PCC 6803 / Kazusa).